The following is a 244-amino-acid chain: Probable metallo-hydrolase YhfI (244 aa).

7 residues coordinate Zn(2+): histidine 59, histidine 61, aspartate 63, histidine 64, histidine 134, aspartate 155, and histidine 211.

Belongs to the metallo-beta-lactamase superfamily. It depends on Zn(2+) as a cofactor.

The protein is Probable metallo-hydrolase YhfI (yhfI) of Bacillus subtilis (strain 168).